The chain runs to 1962 residues: Sodium channel protein type 10 subunit alpha (1962 aa).

The Cytoplasmic portion of the chain corresponds to 1 to 125 (MEFPFGSLET…FNLIRRTAIK (125 aa)). The disordered stretch occupies residues 32-56 (QAAKKAKGKHREQKDQEEKPRPQLD). Residues 33 to 42 (AAKKAKGKHR) show a composition bias toward basic residues. The span at 43–55 (EQKDQEEKPRPQL) shows a compositional bias: basic and acidic residues. One copy of the I repeat lies at 116–414 (FNLIRRTAIK…VTMAYEEQNQ (299 aa)). Residues 126–149 (VSVHSWFSLFITVTILVNCVGMTQ) traverse the membrane as a helical segment. The Extracellular segment spans residues 150–154 (TELPD). A helical transmembrane segment spans residues 155–174 (RIEYVFTVIYTFEALIKILA). The Cytoplasmic portion of the chain corresponds to 175–187 (RGFCLNEFAYLRD). The helical transmembrane segment at 188 to 206 (PWDWLDFSVITLAYIGEAT) threads the bilayer. Residues 207–212 (ALRGIS) lie on the Extracellular side of the membrane. The chain crosses the membrane as a helical; Voltage-sensor span at residues 213-232 (GLRTFRVLRALKTVSVIPGL). Topologically, residues 233 to 248 (KVIVGALIHSVRKLAD) are cytoplasmic. Residues 249 to 272 (VTILTVFCLSVFALVGLQLFKGNL) traverse the membrane as a helical segment. Over 273–350 (KNKCVKNCAA…PDFNYTSFDS (78 aa)) the chain is Extracellular. A disulfide bond links Cys276 and Cys328. 4 N-linked (GlcNAc...) asparagine glycosylation sites follow: Asn284, Asn288, Asn321, and Asn344. Positions 351-375 (FAWAFLSLFRLMTQDSWERLYQQTL) form an intramembrane region, pore-forming. At 376 to 382 (RASGKMY) the chain is on the extracellular side. A helical membrane pass occupies residues 383-408 (MVFFVLVIFLGSFYLVNLILAVVTMA). Residues 409 to 668 (YEEQNQATID…TWVKLKTVLF (260 aa)) lie on the Cytoplasmic side of the membrane. 4 positions are modified to phosphoserine: Ser450, Ser453, Ser476, and Ser488. Polar residues predominate over residues 452–463 (HSCNGSPLPSKN). Disordered stretches follow at residues 452–493 (HSCN…PYNQ) and 521–586 (LDTS…TGEL). Residues Ser621 and Ser624 each carry the phosphoserine modification. The II repeat unit spans residues 656–920 (CCPTWVKLKT…DEDGEVNNLQ (265 aa)). A helical membrane pass occupies residues 669–693 (GIVTDPFAELTTTLCIVVNTVFMAM). Over 694-704 (EHHGMSSAFEA) the chain is Extracellular. A helical membrane pass occupies residues 705-728 (MLQIGNIVFTVFFTAEMVFKIIAF). Over 729-736 (DPYYYFQK) the chain is Cytoplasmic. Residues 737–756 (RWNIFDCIIVTVSLIELGAA) form a helical membrane-spanning segment. The Extracellular portion of the chain corresponds to 757–762 (RKGSLS). A helical; Voltage-sensor transmembrane segment spans residues 763 to 782 (VLRTFRLLRVFKLAKSWPTL). Over 783–798 (NTLIKIIGNSVGALGN) the chain is Cytoplasmic. The helical transmembrane segment at 799 to 819 (LTIILAIIVFVFALVGKQLLG) threads the bilayer. The Extracellular portion of the chain corresponds to 820-843 (ENYRDNRRNISAPNEEWPRWHMHD). A glycan (N-linked (GlcNAc...) asparagine) is linked at Asn828. The pore-forming intramembrane region spans 844–864 (FFHSFLIVFRILCGEWIENMW). The Extracellular portion of the chain corresponds to 865 to 873 (ACMEVGQKS). Cys866 and Cys875 are disulfide-bonded. The helical transmembrane segment at 874 to 899 (ICLILFLTVMVLGNLVVLNLFTALLL) threads the bilayer. The Cytoplasmic segment spans residues 900-1154 (NSFSADNLAT…GWQVRKTCYR (255 aa)). A compositionally biased stretch (acidic residues) spans 1015–1026 (LDDLEEDGEEDS). The tract at residues 1015-1035 (LDDLEEDGEEDSQSSQQEVIL) is disordered. One copy of the III repeat lies at 1147 to 1456 (QVRKTCYRIV…KKYYNAMKKL (310 aa)). The helical transmembrane segment at 1155–1178 (IVEHSWFESFIIFMILLSSGSLAF) threads the bilayer. The Extracellular segment spans residues 1179–1191 (EDYHLDQKPTVKA). The chain crosses the membrane as a helical span at residues 1192–1217 (LLEYTDRMFTFIFVLEMLLKWVAYGF). The Cytoplasmic portion of the chain corresponds to 1218–1223 (KKYFTN). Residues 1224–1245 (AWCWLDFLIVNISLISLIAKIL) form a helical membrane-spanning segment. Topologically, residues 1246–1249 (QYSD) are extracellular. A helical; Voltage-sensor transmembrane segment spans residues 1250-1271 (VASIKALRTLRALRPLRALSRF). Topologically, residues 1272–1290 (EGMRVVVDALVGAIPSIMN) are cytoplasmic. The helical transmembrane segment at 1291–1318 (VLLVCLIFWLIFSTMGVNFFAGKFGRCI) threads the bilayer. N-linked (GlcNAc...) asparagine glycosylation is found at Asn1319, Asn1335, and Asn1343. At 1319–1360 (NKTNEYFSLVPLSIVNNISDCKYQNHTGSFFWVNVKVNFDNV) the chain is on the extracellular side. An intramembrane region (pore-forming) is located at residues 1361–1382 (AMGYLALLQVATFKGWMDIMYA). Residues 1383–1398 (AVDARDVNLQPKWEDN) are Extracellular-facing. The chain crosses the membrane as a helical span at residues 1399-1425 (VYMYLYFVIFIIFGGFFTLNLFVGVII). Residues 1426–1478 (DNFNQQKKKLGGQDIFMTEEQKKYYNAMKKLGSKKPQKPIPRPLNKYQGFVFD) lie on the Cytoplasmic side of the membrane. Ser1458 is subject to Phosphoserine; by PKC. The stretch at 1465-1764 (IPRPLNKYQG…WEKFDPEATQ (300 aa)) is one IV repeat. A helical transmembrane segment spans residues 1479–1502 (IVTKQAFDIVIMVLICLNMITMMV). At 1503–1513 (ETDEQSAEKTK) the chain is on the extracellular side. A helical membrane pass occupies residues 1514-1537 (ILNKINQFFVAVFTGECVMKMFAL). The Cytoplasmic segment spans residues 1538 to 1543 (RHYYFT). Residues 1544–1567 (NGWNVFDFIVVVLSIGSLVFSVIL) traverse the membrane as a helical segment. Residues 1568–1579 (TSLENYFSPTLF) lie on the Extracellular side of the membrane. The helical; Voltage-sensor transmembrane segment at 1580-1601 (RVIRLARIGRILRLIRAAKGIR) threads the bilayer. The Cytoplasmic portion of the chain corresponds to 1602–1616 (TLLFALMMSLPALFN). A helical transmembrane segment spans residues 1617–1639 (IGLLLFLVMFIYSIFGMASFPHV). Residues 1640 to 1653 (SWEAGIDDMFNFQT) lie on the Extracellular side of the membrane. Residues 1654 to 1676 (FANSMLCLFQITTSAGWDGLLSP) constitute an intramembrane region (pore-forming). The Extracellular segment spans residues 1677 to 1704 (ILNTGPPYCDPNLPNSNGSRGNCGSPAV). Asn1693 is a glycosylation site (N-linked (GlcNAc...) asparagine). The chain crosses the membrane as a helical span at residues 1705–1729 (GILFFTTYIIISFLIVVNMYIAVIL). Residues 1730-1962 (ENFNVATQES…TSKKVTAPGP (233 aa)) lie on the Cytoplasmic side of the membrane. Residues 1858–1887 (EDISATVIQKAYRSYVLHRSMTISNPPAVP) enclose the IQ domain. The tract at residues 1914 to 1962 (KSETASAASFPPSYDSVTRGLSDQINMSTSSSMQNEDEGTSKKVTAPGP) is disordered. Residues 1928–1947 (DSVTRGLSDQINMSTSSSMQ) show a composition bias toward polar residues.

The protein belongs to the sodium channel (TC 1.A.1.10) family. Nav1.8/SCN10A subfamily. As to quaternary structure, the channel consists of an ion conducting pore forming alpha-subunit regulated by one or more associated auxiliary subunits SCN1B, SCN2B and SCN3B; electrophysiological properties may vary depending on the type of the associated beta subunits. Found in a number of complexes with PRX, DYNLT1 and PDZD2. Interacts with proteins such as FSTL1, PRX, DYNLT1, PDZD2, S100A10 and many others. Interacts with NEDD4 and NEDD4L. In terms of processing, ubiquitinated by NEDD4L; which promotes its endocytosis. Phosphorylation at Ser-1458 by PKC in a highly conserved cytoplasmic loop slows inactivation of the sodium channel and reduces peak sodium currents. Post-translationally, lacks the cysteine which covalently binds the conotoxin GVIIJ. This cysteine (position 825) is speculated in other sodium channel subunits alpha to be implied in covalent binding with the sodium channel subunit beta-2 or beta-4. In terms of tissue distribution, expressed in nodose ganglia, but not in cortex, hippocampus, cerebellum, liver, heart and skeletal muscle.

It is found in the cell membrane. It carries out the reaction Na(+)(in) = Na(+)(out). In terms of biological role, tetrodotoxin-resistant channel that mediates the voltage-dependent sodium ion permeability of excitable membranes. Assuming opened or closed conformations in response to the voltage difference across the membrane, the protein forms a sodium-selective channel through which sodium ions may pass in accordance with their electrochemical gradient. Plays a role in neuropathic pain mechanisms. This is Sodium channel protein type 10 subunit alpha (SCN10A) from Canis lupus familiaris (Dog).